Consider the following 99-residue polypeptide: Bacterial microcompartment protein homohexamer (99 aa).

A BMC domain is found at 4 to 88; sequence ALGMIEVRGF…PHVNVDAALP (85 aa).

This sequence belongs to the bacterial microcompartments protein family. In terms of assembly, homohexamer with a small central pore. When purified protein is examined by atomic force microscopy it dynamically makes uniform patches about 35 Angstroms thick with hexamers in the same orientation. In the BMC the concave side faces outward, with the N- and C-terminii exposed to the cytoplasm.

The protein localises to the bacterial microcompartment. In terms of biological role, the only hexameric shell protein in this bacterium, it forms the majority of the bacterial microcompartment (BMC) shell. Expression of 5 proteins in E.coli (BMC-H (Hoch_5815), BMC-P (Hoch_5814), and 3 BMC-T (Hoch_5812, Hoch_5816, Hoch_3341)) forms a 40 nm artificial BMC with a molecular mass of 6.5 MDa. There are 60 BMC-H hexamers per BMC. The shell facets are 20-30 Angstroms thick (a single hexamer layer), with 1 of BMC-T trimers protruding to the exterior. The chain is Bacterial microcompartment protein homohexamer from Haliangium ochraceum (strain DSM 14365 / JCM 11303 / SMP-2).